The following is a 187-amino-acid chain: Ubiquinone biosynthesis protein COQ4 homolog, mitochondrial (187 aa).

Residues His-77, Asp-78, His-81, and Glu-93 each coordinate Zn(2+).

Belongs to the COQ4 family. Component of a multi-subunit COQ enzyme complex. The cofactor is Zn(2+).

Its subcellular location is the mitochondrion inner membrane. The enzyme catalyses a 4-hydroxy-3-methoxy-5-(all-trans-polyprenyl)benzoate + H(+) = a 2-methoxy-6-(all-trans-polyprenyl)phenol + CO2. Its pathway is cofactor biosynthesis; ubiquinone biosynthesis. Its function is as follows. Lyase that catalyzes the C1-decarboxylation of 4-hydroxy-3-methoxy-5-(all-trans-polyprenyl)benzoic acid into 2-methoxy-6-(all-trans-polyprenyl)phenol during ubiquinone biosynthesis. This is Ubiquinone biosynthesis protein COQ4 homolog, mitochondrial from Leishmania braziliensis.